The sequence spans 463 residues: Adenosylhomocysteinase (463 aa).

Substrate contacts are provided by threonine 54, aspartate 128, and glutamate 189. 190-192 (TTT) is a binding site for NAD(+). Lysine 219 and aspartate 223 together coordinate substrate. NAD(+) contacts are provided by residues asparagine 224, 253 to 258 (GYGDVG), glutamate 276, asparagine 311, 332 to 334 (IGH), and asparagine 377.

The protein belongs to the adenosylhomocysteinase family. As to quaternary structure, homotetramer. NAD(+) serves as cofactor.

It localises to the cytoplasm. It carries out the reaction S-adenosyl-L-homocysteine + H2O = L-homocysteine + adenosine. It functions in the pathway amino-acid biosynthesis; L-homocysteine biosynthesis; L-homocysteine from S-adenosyl-L-homocysteine: step 1/1. May play a key role in the regulation of the intracellular concentration of adenosylhomocysteine. The sequence is that of Adenosylhomocysteinase from Rhodobacter capsulatus (strain ATCC BAA-309 / NBRC 16581 / SB1003).